Reading from the N-terminus, the 293-residue chain is Protease HtpX homolog (293 aa).

2 helical membrane passes run 4–24 and 38–58; these read IFLFLITNLAVMVVLSATMRI and LTGLLIFSAVIGFTGAIISLL. Residue His146 participates in Zn(2+) binding. Glu147 is an active-site residue. His150 is a binding site for Zn(2+). A run of 2 helical transmembrane segments spans residues 161–181 and 198–218; these read LIQGVVNTFVVFLARVVGYFV and ATVIVCEIVFGILASIIVAWF. A Zn(2+)-binding site is contributed by Glu223.

Belongs to the peptidase M48B family. Zn(2+) serves as cofactor.

Its subcellular location is the cell inner membrane. The sequence is that of Protease HtpX homolog from Bordetella parapertussis (strain 12822 / ATCC BAA-587 / NCTC 13253).